The following is a 377-amino-acid chain: Chaperone protein DnaJ (377 aa).

Positions 4 to 69 (DYYEALGVTR…QKRAAYDRFG (66 aa)) constitute a J domain. The CR-type zinc finger occupies 135 to 213 (GKTAQIRVPT…CHGQGRVTQE (79 aa)). Residues C148, C151, C165, C168, C187, C190, C201, and C204 each contribute to the Zn(2+) site. CXXCXGXG motif repeat units lie at residues 148 to 155 (CDECSGSG), 165 to 172 (CTMCSGSG), 187 to 194 (CPGCNGRG), and 201 to 208 (CEKCHGQG).

Belongs to the DnaJ family. In terms of assembly, homodimer. Requires Zn(2+) as cofactor.

It is found in the cytoplasm. Participates actively in the response to hyperosmotic and heat shock by preventing the aggregation of stress-denatured proteins and by disaggregating proteins, also in an autonomous, DnaK-independent fashion. Unfolded proteins bind initially to DnaJ; upon interaction with the DnaJ-bound protein, DnaK hydrolyzes its bound ATP, resulting in the formation of a stable complex. GrpE releases ADP from DnaK; ATP binding to DnaK triggers the release of the substrate protein, thus completing the reaction cycle. Several rounds of ATP-dependent interactions between DnaJ, DnaK and GrpE are required for fully efficient folding. Also involved, together with DnaK and GrpE, in the DNA replication of plasmids through activation of initiation proteins. The protein is Chaperone protein DnaJ of Brucella canis (strain ATCC 23365 / NCTC 10854 / RM-666).